Here is a 219-residue protein sequence, read N- to C-terminus: dTTP/UTP pyrophosphatase (219 aa).

The Proton acceptor role is filled by Asp-79.

This sequence belongs to the Maf family. YhdE subfamily. A divalent metal cation serves as cofactor.

The protein localises to the cytoplasm. It carries out the reaction dTTP + H2O = dTMP + diphosphate + H(+). The catalysed reaction is UTP + H2O = UMP + diphosphate + H(+). In terms of biological role, nucleoside triphosphate pyrophosphatase that hydrolyzes dTTP and UTP. May have a dual role in cell division arrest and in preventing the incorporation of modified nucleotides into cellular nucleic acids. The protein is dTTP/UTP pyrophosphatase of Oleidesulfovibrio alaskensis (strain ATCC BAA-1058 / DSM 17464 / G20) (Desulfovibrio alaskensis).